The chain runs to 617 residues: Protein AsmA (617 aa).

Topologically, residues 1 to 3 (MRR) are cytoplasmic. The helical transmembrane segment at 4 to 24 (FLTTLMILLVVLVAGLSALVL) threads the bilayer. Residues 25–617 (LVNPNDFRDY…KDVKKLLEKM (593 aa)) are Periplasmic-facing. Residues 302–319 (TANGENGAAQQGQSQSTL) are compositionally biased toward polar residues. Residues 302–321 (TANGENGAAQQGQSQSTLPR) form a disordered region.

The protein belongs to the AsmA family.

The protein resides in the cell inner membrane. In terms of biological role, could be involved in the assembly of outer membrane proteins. May indirectly influence the assembly of outer membrane proteins, potentially by altering outer membrane fluidity. Inhibits the assembly of mutant forms of outer membrane protein F (OmpF). This Escherichia coli (strain K12) protein is Protein AsmA.